The primary structure comprises 557 residues: uncharacterized protein (557 aa).

A signal peptide spans 1 to 30 (MAPRRRRHTRIAGLRVVGTATLVAATTLTA). The N-palmitoyl cysteine moiety is linked to residue cysteine 31. A lipid anchor (S-diacylglycerol cysteine) is attached at cysteine 31.

This sequence to M.bovis Mb2616c and M.leprae ML0489.

It is found in the cell membrane. This is an uncharacterized protein from Mycobacterium tuberculosis (strain ATCC 25618 / H37Rv).